A 718-amino-acid polypeptide reads, in one-letter code: Nucleolar protein 11 (718 aa).

The residue at position 346 (Lys-346) is an N6-methyllysine.

In terms of assembly, interacts with UTP4. Interacts with FBL/fibrillarin in a transcription-dependent manner. May associate with the proposed t-UTP subcomplex of the SSU processome containing at least UTP4, WDR43, HEATR1, UTP15, WDR75.

It is found in the nucleus. The protein localises to the nucleolus. Its function is as follows. Ribosome biogenesis factor. May be required for both optimal rDNA transcription and small subunit (SSU) pre-rRNA processing at sites A', A0, 1 and 2b. This Bos taurus (Bovine) protein is Nucleolar protein 11 (NOL11).